A 787-amino-acid polypeptide reads, in one-letter code: MQFSYSWLKTQADTELSSDKLEHLLTMSGLEVEEAETAAPAFAGVVIAEVKSVEKHPDADRLNVTRVDVGTGELVQIVCGAPNVKAGIKVPCSLPGAVLPGNFKIKPTKMRGVVSNGMLCSTDELGLPDDGVNGLHILPEDAPVGTNIREYLDLDDTLFTLKITPNRADCLSVKGIAREVSALTGCAFRQPEIRKMPSEGGKTRAVKIDAPADCGRFISRVIENVNAKAATPDWMKQRLERSGIRSISVLVDIGNYVMLEIGQPMHVFDADKLSGSLHIRRAREGETLECLNEKTVSLSENTLVVADEKGALSLAGLMGGAASAVSDGTQNIVLEAAWFAPEIIAGKSRQYGFGSDSSFRFERGVDYRLQADAIERATELVLQICGGAAGEMVEAQGELPEVKQVGLRLGRLKTVLGVDIPSEQVETILQHLGLQPEKTAEGFRVTAPSFRFDIEIEADLIEEIGRVYGYENIPDDYTSGRLKMLELPETRRPRFAVYNEMAARGYREVVSYAFVNEQWEQDFAANADPIRLQNPLAAQYAVMRSTLIGGLVEILQNNLNRKQNRVRVFEIARVFGKGSDGRFVQNERIGGLWYGAAMPEQWGGKTRNADFYDIKADVENLLKNKAVEFVKTGYPALHPGRAANIVSDGKVIGFVGELHPKWLQKYDLPQAPLVFEIDMAAVLECGKTRYRAVSKFQPVRRDLAFVMPEAMSHDDLLLVLKGAANKLVQEISVFDVYRGMGLPEGMKSVAVKVILQDMENTLTDEAVEPLIGKLIGAATAAGARLRS.

Positions 39–149 constitute a tRNA-binding domain; it reads APAFAGVVIA…EDAPVGTNIR (111 aa). Positions 400–475 constitute a B5 domain; that stretch reads PEVKQVGLRL…RVYGYENIPD (76 aa). Asp-453, Asp-459, Glu-462, and Glu-463 together coordinate Mg(2+). The region spanning 694-786 is the FDX-ACB domain; that stretch reads SKFQPVRRDL…AATAAGARLR (93 aa).

Belongs to the phenylalanyl-tRNA synthetase beta subunit family. Type 1 subfamily. Tetramer of two alpha and two beta subunits. Mg(2+) is required as a cofactor.

It is found in the cytoplasm. The catalysed reaction is tRNA(Phe) + L-phenylalanine + ATP = L-phenylalanyl-tRNA(Phe) + AMP + diphosphate + H(+). The chain is Phenylalanine--tRNA ligase beta subunit (pheT) from Neisseria meningitidis serogroup A / serotype 4A (strain DSM 15465 / Z2491).